Consider the following 697-residue polypeptide: Portal protein (697 aa).

Residues 633–697 form a disordered region; it reads MSREAAGGVP…RRAGGPYGFH (65 aa). Residues 664–689 are compositionally biased toward basic and acidic residues; sequence ITADEERRGPERVGRFRNGGPDDPRR.

The protein belongs to the herpesviridae portal protein family. As to quaternary structure, homododecamerizes. Interacts with terminase subunits TRM1 and TRM3.

Its subcellular location is the virion. The protein resides in the host nucleus. Its function is as follows. Forms a portal in the viral capsid through which viral DNA is translocated during DNA packaging. Assembles as a dodecamer at a single fivefold axe of the T=16 icosahedric capsid. Binds to the molecular motor that translocates the viral DNA, termed terminase. This is Portal protein (UL104) from Homo sapiens (Human).